The following is a 347-amino-acid chain: MEQSKGSASQLAFVYVGTVVGAGFATGREIVEFFLKFGWFGFFGILVSGGMFTLLGAKLMIISKRINAKSYQEMNIFLFGATAGRIINVFMLFVLLGVTSVMLSGAGALFEEQLGMSAQIGMLITIGLSLIVMTRGVKGIFGVNVFVVPLLIIFSMIVVADSFIFSESRNAAQWVWPHRWDWLLSAVSYGALNLSLAQAVLVPLANEMSSEKVIKKGALIGGTMLTIVLSASFLSLSTLPDVFLYDIPMAQVVYLFARSVHLIYLLIIFGEVFTSVIGNLYGLEKQVQSFLPVKSKYIFAAIMITAYITSQIGYGRLISTIYPLFGYVSLAFIGALLCKKAPRRRSL.

The next 10 helical transmembrane spans lie at 6 to 26 (GSAS…GFAT), 37 to 57 (FGWF…LLGA), 90 to 110 (FMLF…GALF), 114 to 134 (LGMS…IVMT), 140 to 160 (IFGV…IVVA), 182 to 202 (WLLS…AVLV), 217 to 237 (GALI…LSLS), 262 to 282 (LIYL…NLYG), 289 to 309 (SFLP…AYIT), and 317 to 337 (LIST…GALL).

It localises to the cell membrane. This is an uncharacterized protein from Bacillus subtilis (strain 168).